We begin with the raw amino-acid sequence, 102 residues long: ATP-dependent Clp protease adapter protein ClpS (102 aa).

The protein belongs to the ClpS family. Binds to the N-terminal domain of the chaperone ClpA.

Its function is as follows. Involved in the modulation of the specificity of the ClpAP-mediated ATP-dependent protein degradation. This is ATP-dependent Clp protease adapter protein ClpS from Janthinobacterium sp. (strain Marseille) (Minibacterium massiliensis).